The primary structure comprises 457 residues: Neuropeptide receptor npr-1 (457 aa).

At 1–22 the chain is on the extracellular side; that stretch reads MEVENFTDCQVYWKVYPDPSQS. Residues 23-43 form a helical membrane-spanning segment; the sequence is IYAIVPFLTVYLFLFFLGLFG. Residues 44–62 are Cytoplasmic-facing; that stretch reads NVTLIYVTCSHKALLSVQN. A helical membrane pass occupies residues 63–83; that stretch reads IFILNLAASDCMMCILSLPIT. At 84 to 100 the chain is on the extracellular side; that stretch reads PITNVYKNWYFGNLLCH. A disulfide bridge links cysteine 99 with cysteine 178. The helical transmembrane segment at 101–121 threads the bilayer; it reads LIPCIQGISIFVCTFSLGAIA. Residues 122 to 140 are Cytoplasmic-facing; that stretch reads LDRYILVVRPHSTPLSQRG. Residues 141–161 form a helical membrane-spanning segment; the sequence is AFLTTVLLWILSFVVTLPYAF. Residues 162-193 are Extracellular-facing; the sequence is NMQMIEYTEERICGYFCTEKWESAKSRRAYTM. Residues 194–214 traverse the membrane as a helical segment; sequence IVMLAQFVVPFAVMAFCYANI. Residues 215–279 lie on the Cytoplasmic side of the membrane; that stretch reads VSVLSKRAQT…LQNRRTTSIL (65 aa). The chain crosses the membrane as a helical span at residues 280 to 300; that stretch reads VTMVVWFGITWLPHNVISLII. At 301–324 the chain is on the extracellular side; that stretch reads EYDDTQSFFRLYGRDDYDISYLLN. The chain crosses the membrane as a helical span at residues 325–345; sequence LFTHSIAMSNNVLNPVLYAWL. Residues 346–457 lie on the Cytoplasmic side of the membrane; that stretch reads NPSFRQLVIK…IEFSVNDTLV (112 aa).

This sequence belongs to the G-protein coupled receptor 1 family. Expressed in neurons, including neurons in the head, the ventral nerve cord, and the preanal ganglion.

The protein localises to the membrane. In terms of biological role, G-protein coupled receptor for FARP(FMRFamide related peptide) neuropeptides. Activated by FARP neuropeptides flp-18 and flp-21. Plays a role in modulating social and feeding behavior. Required to modulate locomotion quiescence during the sleep-like state called lethargus, which occurs during molting between larval and adult stages, in part by regulating touch sensitivity. This is Neuropeptide receptor npr-1 from Caenorhabditis elegans.